Reading from the N-terminus, the 206-residue chain is Large ribosomal subunit protein uL4 (206 aa).

Residues 47 to 77 (GTHDTKTRGEVSGGGRKPWRQKGTGRARHGS) are disordered. The segment covering 63–77 (KPWRQKGTGRARHGS) has biased composition (basic residues).

Belongs to the universal ribosomal protein uL4 family. As to quaternary structure, part of the 50S ribosomal subunit.

Its function is as follows. One of the primary rRNA binding proteins, this protein initially binds near the 5'-end of the 23S rRNA. It is important during the early stages of 50S assembly. It makes multiple contacts with different domains of the 23S rRNA in the assembled 50S subunit and ribosome. Functionally, forms part of the polypeptide exit tunnel. This Carboxydothermus hydrogenoformans (strain ATCC BAA-161 / DSM 6008 / Z-2901) protein is Large ribosomal subunit protein uL4.